Here is a 275-residue protein sequence, read N- to C-terminus: 2,3,4,5-tetrahydropyridine-2,6-dicarboxylate N-succinyltransferase (275 aa).

It belongs to the transferase hexapeptide repeat family.

It is found in the cytoplasm. The catalysed reaction is (S)-2,3,4,5-tetrahydrodipicolinate + succinyl-CoA + H2O = (S)-2-succinylamino-6-oxoheptanedioate + CoA. The protein operates within amino-acid biosynthesis; L-lysine biosynthesis via DAP pathway; LL-2,6-diaminopimelate from (S)-tetrahydrodipicolinate (succinylase route): step 1/3. In Ralstonia pickettii (strain 12J), this protein is 2,3,4,5-tetrahydropyridine-2,6-dicarboxylate N-succinyltransferase.